The sequence spans 223 residues: Putative 3-methyladenine DNA glycosylase (223 aa).

This sequence belongs to the DNA glycosylase MPG family.

The sequence is that of Putative 3-methyladenine DNA glycosylase from Rickettsia typhi (strain ATCC VR-144 / Wilmington).